We begin with the raw amino-acid sequence, 488 residues long: N-succinylglutamate 5-semialdehyde dehydrogenase (488 aa).

Gly-221–Gly-226 is a binding site for NAD(+). Residues Glu-244 and Cys-278 contribute to the active site.

It belongs to the aldehyde dehydrogenase family. AstD subfamily.

It carries out the reaction N-succinyl-L-glutamate 5-semialdehyde + NAD(+) + H2O = N-succinyl-L-glutamate + NADH + 2 H(+). Its pathway is amino-acid degradation; L-arginine degradation via AST pathway; L-glutamate and succinate from L-arginine: step 4/5. In terms of biological role, catalyzes the NAD-dependent reduction of succinylglutamate semialdehyde into succinylglutamate. The chain is N-succinylglutamate 5-semialdehyde dehydrogenase from Pseudomonas fluorescens (strain ATCC BAA-477 / NRRL B-23932 / Pf-5).